Reading from the N-terminus, the 549-residue chain is Cytoplasmic trehalase (549 aa).

Substrate is bound by residues arginine 168, 175-176 (WD), asparagine 212, 221-223 (RSQ), 292-294 (RDE), and glycine 324. Residues aspartate 326 and glutamate 509 each act as proton donor/acceptor in the active site. Glutamate 525 serves as a coordination point for substrate.

This sequence belongs to the glycosyl hydrolase 37 family. Monomer.

The protein resides in the cytoplasm. The enzyme catalyses alpha,alpha-trehalose + H2O = alpha-D-glucose + beta-D-glucose. It functions in the pathway glycan degradation; trehalose degradation; D-glucose from alpha,alpha-trehalose: step 1/1. In terms of biological role, hydrolyzes trehalose to glucose. Could be involved, in cells returning to low osmolarity conditions, in the utilization of the accumulated cytoplasmic trehalose, which was synthesized in response to high osmolarity. The chain is Cytoplasmic trehalase from Salmonella arizonae (strain ATCC BAA-731 / CDC346-86 / RSK2980).